The chain runs to 270 residues: Regulatory protein RecX (270 aa).

This sequence belongs to the RecX family.

The protein resides in the cytoplasm. Its function is as follows. Modulates RecA activity. In Bacillus cereus (strain 03BB102), this protein is Regulatory protein RecX.